The chain runs to 540 residues: Putative F-box/LRR-repeat protein At5g41840 (540 aa).

The F-box domain occupies 13 to 61; it reads GDRISGLPDALICHILSFLPTKEAASTTVLAKRWKPLLAFVPNLNFDDS. LRR repeat units lie at residues 80–105, 137–165, 189–214, 217–242, 254–282, 329–360, and 361–386; these read FMSF…HVKC, RNYC…KIQF, YFKI…VLAN, WADS…NFCR, YEDY…EYSD, ILYL…TIKT, and TPYV…VFEG.

This is Putative F-box/LRR-repeat protein At5g41840 from Arabidopsis thaliana (Mouse-ear cress).